The sequence spans 257 residues: MVNDKLIIDKKKFNSRLIVGTGKYKSMAECAKAIKLSGAEIVTVAVRRVNISDKKKPLLMDYIDPKKITYLPNTAGCFNSEEALRTLRLAREIGGWKLVKLEVLGDKKNLFPDMIETLKSTEVLTREGFRVMVYCNDDPLMAKRLENVGACAIMPLAAPIGSGLGIQNTTNIKIIRSQTKLPLIIDAGLGQASDAAIAMELGCDGVLANTAIAKAKKPFQMALAFKNGVIAGRQSYLAGRIEKSIYGSASSPKTGII.

The active-site Schiff-base intermediate with DXP is lysine 100. 1-deoxy-D-xylulose 5-phosphate contacts are provided by residues glycine 161, 187–188, and 209–210; these read AG and NT.

The protein belongs to the ThiG family. As to quaternary structure, homotetramer. Forms heterodimers with either ThiH or ThiS.

The protein localises to the cytoplasm. The enzyme catalyses [ThiS sulfur-carrier protein]-C-terminal-Gly-aminoethanethioate + 2-iminoacetate + 1-deoxy-D-xylulose 5-phosphate = [ThiS sulfur-carrier protein]-C-terminal Gly-Gly + 2-[(2R,5Z)-2-carboxy-4-methylthiazol-5(2H)-ylidene]ethyl phosphate + 2 H2O + H(+). It participates in cofactor biosynthesis; thiamine diphosphate biosynthesis. Functionally, catalyzes the rearrangement of 1-deoxy-D-xylulose 5-phosphate (DXP) to produce the thiazole phosphate moiety of thiamine. Sulfur is provided by the thiocarboxylate moiety of the carrier protein ThiS. In vitro, sulfur can be provided by H(2)S. This Pelagibacter ubique (strain HTCC1062) protein is Thiazole synthase.